The following is a 305-amino-acid chain: Glycine--tRNA ligase alpha subunit (305 aa).

This sequence belongs to the class-II aminoacyl-tRNA synthetase family. Tetramer of two alpha and two beta subunits.

The protein resides in the cytoplasm. It carries out the reaction tRNA(Gly) + glycine + ATP = glycyl-tRNA(Gly) + AMP + diphosphate. The polypeptide is Glycine--tRNA ligase alpha subunit (Streptococcus pyogenes serotype M49 (strain NZ131)).